Consider the following 95-residue polypeptide: MSVTTKDVAYIAELARLKFTDAEQEKMASELNMILHYIEKLNGIDTEGVEPLSTIHDQINVLRADVEHTPLSNDEALKNAPDSQDRFFKVPKVIG.

This sequence belongs to the GatC family. As to quaternary structure, heterotrimer of A, B and C subunits.

It catalyses the reaction L-glutamyl-tRNA(Gln) + L-glutamine + ATP + H2O = L-glutaminyl-tRNA(Gln) + L-glutamate + ADP + phosphate + H(+). It carries out the reaction L-aspartyl-tRNA(Asn) + L-glutamine + ATP + H2O = L-asparaginyl-tRNA(Asn) + L-glutamate + ADP + phosphate + 2 H(+). Its function is as follows. Allows the formation of correctly charged Asn-tRNA(Asn) or Gln-tRNA(Gln) through the transamidation of misacylated Asp-tRNA(Asn) or Glu-tRNA(Gln) in organisms which lack either or both of asparaginyl-tRNA or glutaminyl-tRNA synthetases. The reaction takes place in the presence of glutamine and ATP through an activated phospho-Asp-tRNA(Asn) or phospho-Glu-tRNA(Gln). The chain is Aspartyl/glutamyl-tRNA(Asn/Gln) amidotransferase subunit C from Chlorobaculum tepidum (strain ATCC 49652 / DSM 12025 / NBRC 103806 / TLS) (Chlorobium tepidum).